A 79-amino-acid polypeptide reads, in one-letter code: Acyl carrier protein (79 aa).

Positions 2–77 (ADHASKIKDI…DAVAYLEAKV (76 aa)) constitute a Carrier domain. S37 is modified (O-(pantetheine 4'-phosphoryl)serine).

This sequence belongs to the acyl carrier protein (ACP) family. In terms of processing, 4'-phosphopantetheine is transferred from CoA to a specific serine of apo-ACP by AcpS. This modification is essential for activity because fatty acids are bound in thioester linkage to the sulfhydryl of the prosthetic group.

The protein localises to the cytoplasm. It functions in the pathway lipid metabolism; fatty acid biosynthesis. Functionally, carrier of the growing fatty acid chain in fatty acid biosynthesis. The sequence is that of Acyl carrier protein from Gemmatimonas aurantiaca (strain DSM 14586 / JCM 11422 / NBRC 100505 / T-27).